We begin with the raw amino-acid sequence, 416 residues long: MGDWSFLGRLLENAQEHSTVIGKVWLTVLFIFRILVLGAAAEEVWGDEQSDFTCNTQQPGCENVCYDRAFPISHIRFWALQIIFVSTPTLIYLGHVLHIVRMEEKKKEREEELLRRDNPQHGRGREPMRTGSPRDPPLRDDRGKVRIAGALLRTYVFNIIFKTLFEVGFIAGQYFLYGFQLQPLYRCDRWPCPNTVDCFISRPTEKTIFVIFMLAVACASLVLNMLEIYHLGWKKLKQGVTNHFNPDASEVRHKPLDPLSEAANSGPPSVSIGLPPYYTHPACPTVQGKATGFPGAPLLPADFTVVTLNDAQGRGHPVKHCNGHHLTTEQNWASLGAEPQTPASKPSSAASSPHGRKGLTDSSGSSLEESALVVTPEGEQALATTVEMHSPPLVLLDPERSSKSSSGRARPGDLAI.

An intramembrane segment occupies 2-15; that stretch reads GDWSFLGRLLENAQ. Over 16–19 the chain is Cytoplasmic; sequence EHST. A helical membrane pass occupies residues 20–40; it reads VIGKVWLTVLFIFRILVLGAA. Over 41–71 the chain is Extracellular; that stretch reads AEEVWGDEQSDFTCNTQQPGCENVCYDRAFP. Intrachain disulfides connect C54–C198, C61–C192, and C65–C187. Residues 72 to 92 form a helical membrane-spanning segment; it reads ISHIRFWALQIIFVSTPTLIY. Over 93-158 the chain is Cytoplasmic; it reads LGHVLHIVRM…GALLRTYVFN (66 aa). The span at 110 to 128 shows a compositional bias: basic and acidic residues; it reads EEELLRRDNPQHGRGREPM. The segment at 110-141 is disordered; the sequence is EEELLRRDNPQHGRGREPMRTGSPRDPPLRDD. A helical membrane pass occupies residues 159-179; sequence IIFKTLFEVGFIAGQYFLYGF. Topologically, residues 180–207 are extracellular; it reads QLQPLYRCDRWPCPNTVDCFISRPTEKT. The chain crosses the membrane as a helical span at residues 208 to 228; the sequence is IFVIFMLAVACASLVLNMLEI. The Cytoplasmic portion of the chain corresponds to 229–416; the sequence is YHLGWKKLKQ…GRARPGDLAI (188 aa). A disordered region spans residues 336-416; it reads GAEPQTPASK…GRARPGDLAI (81 aa). A compositionally biased stretch (low complexity) spans 342–353; sequence PASKPSSAASSP.

The protein belongs to the connexin family. Alpha-type (group II) subfamily. As to quaternary structure, a hemichannel or connexon is composed of a hexamer of connexins. A functional gap junction is formed by the apposition of two hemichannels. Forms heteromeric channels with GJA8. As to expression, detected in eye lens (at protein level). Most abundant in lens, but also present in heart and kidney.

Its subcellular location is the cell membrane. It is found in the cell junction. It localises to the gap junction. Its function is as follows. Structural component of lens fiber gap junctions. Gap junctions are dodecameric channels that connect the cytoplasm of adjoining cells. They are formed by the docking of two hexameric hemichannels, one from each cell membrane. Small molecules and ions diffuse from one cell to a neighboring cell via the central pore. In Rattus norvegicus (Rat), this protein is Gap junction alpha-3 protein (Gja3).